Here is a 61-residue protein sequence, read N- to C-terminus: Large ribosomal subunit protein bL32 (61 aa).

Residues 1–22 are compositionally biased toward basic residues; that stretch reads MAVPKKKTSRARRDRRRSHHAL. The interval 1–24 is disordered; sequence MAVPKKKTSRARRDRRRSHHALRG.

Belongs to the bacterial ribosomal protein bL32 family.

This is Large ribosomal subunit protein bL32 from Rubrobacter xylanophilus (strain DSM 9941 / JCM 11954 / NBRC 16129 / PRD-1).